Reading from the N-terminus, the 1152-residue chain is MATLDNCTQVHHMFAYNREHGTNYTRNHFRRYLAAQRIGFYYDWDDDVYECPTCEAIYHSLDEIKNWHECDPPAFDLNDFITDARLKSAPVPDLGPVIVETPKVEEKQELNFFAATPAPEVLQWKCRGLQFGSFTELETSEPVVSAPKPNCEEPARTIAKPEEPVEQETCGDGKRLLQAQMEVDKAEQDLAFAYLSASLKPRLEGRTTATIARRRDGCLVYKTKPSWSQRKGTKKILKVDTLACKNPYIPAVVDKISIAGGSSASVMHEQQKPKILHTTPSRKVATHYKRTVMNQQTLTALINQVGTIILNAEKEFEVVGCRKQKVTGKGTRHNGVRLVKLKTAHEEGHRRKVDIRIPNGLRSIVTRISARGGWHKTWTDSELSPGSSGYVLNSSKIIGEFGLRRHSIFVVRGRVYGKIIDSQSKVTHTLTHRMVQYSDVARNFWNGYSTCFMHNTPKDILHTCTSDFDVKDCGTVAALLTQTLFQFGKITCGKCAIEYKNLTRDELATRVNKEIDGTIISIQTQHPRFVHVLNFLRLIKQVLNAKNGNFGAFQETERIIGDRMDAPFSHVNKLNAIVIKGNQATSDEMAQASNHVLEIARYFKNRTENIQKGSLKSFRNKISGKAHLNPSLMCDNQLDKNGGFEWGQRSYHAKRFFDGYFETIDPSDGYSKYTIRRNPNGHRKLAIGNLIVSTNFESHRRSMVGEPIEDPGLTNQCVSKEGGAFIYPCCCVTDEYGKPTLSEIKMPTKHHLVLGNAGDPKYVDLPKEAEGKMFVAKDGYCYINIFLAMLVDVPEDQAKDFTKMAREIAVKQLGEWPSMMDVATACNILATFHPDTRRSELPRILVDHATKTFHVIDSYGSITTGYHILKANTVTQLVKFAHESLESEMQHYRVGGEPDKAPRKPAGNVPTLGISDLKNLGVESENEEHSIRPNLQRLIKAIYRPRMMRSLLTEEPYLLILSIVSPGVLMALYNSGSLERTMHEFLQTDQRLSATAQILKHLAKKVSLAKTLTIQNAILEGGAGSLNEILDAPAGRSLSYRLAKQTVEVMMARSDMDKELVDVGFSVLRDQKNELIEKKLSHGFGGLVARIAIVWKIISNASLAAMAGHLYSRSNPNRCRRFERQIQYLGWVCFQKRDLAPKGNLLRRSKES.

The 146-residue stretch at 292-437 (VMNQQTLTAL…HTLTHRMVQY (146 aa)) folds into the Peptidase S30 domain. Residues H345, D354, and S388 each act as for P1 proteinase activity in the active site. An Involved in interaction with stylet and aphid transmission motif is present at residues 489–492 (KITC). Residues 747 to 749 (PTK) carry the Involved in virions binding and aphid transmission motif. One can recognise a Peptidase C6 domain in the interval 773 to 895 (MFVAKDGYCY…ESEMQHYRVG (123 aa)). Residues C781 and H854 each act as for helper component proteinase activity in the active site.

Belongs to the potyviridae P3N-PIPO polyprotein family. Interacts (via PIPO domain) with host PCaP1 protein; this interaction may help to anchor the movement complex to the plasma membrane from which the complex could move to the plasmodesmata. Potyviral RNA is expressed as two polyproteins which undergo post-translational proteolytic processing. Genome polyprotein is processed by NIa-pro, P1 and HC-pro proteinases resulting in the production of at least ten individual proteins. P3N-PIPO is cleaved by P1 and HC-pro proteinases resulting in the production of three individual proteins. The P1 proteinase and the HC-pro cleave only their respective C-termini autocatalytically.

It is found in the host cell junction. The protein resides in the host plasmodesma. It carries out the reaction Hydrolyzes a Gly-|-Gly bond at its own C-terminus, commonly in the sequence -Tyr-Xaa-Val-Gly-|-Gly, in the processing of the potyviral polyprotein.. Functionally, required for aphid transmission and also has proteolytic activity. Only cleaves a Gly-Gly dipeptide at its own C-terminus. Interacts with virions and aphid stylets. Acts as a suppressor of RNA-mediated gene silencing, also known as post-transcriptional gene silencing (PTGS), a mechanism of plant viral defense that limits the accumulation of viral RNAs. May have RNA-binding activity. Its function is as follows. Allows efficient cell to cell propagation, by bypassing the host cell wall barrier. Transports viral genome to neighboring plant cells directly through plasmosdesmata, without any budding. The protein is P3N-PIPO polyprotein of Carthamus tinctorius (Safflower).